The primary structure comprises 506 residues: Steroid (22S)-hydroxylase (506 aa).

A helical membrane pass occupies residues 12-32 (LLFFLPFILLALLTFYTTTVA). Heme is bound at residue Cys449.

It belongs to the cytochrome P450 family. Heme is required as a cofactor.

Its subcellular location is the membrane. It carries out the reaction a C28-steroid + reduced [NADPH--hemoprotein reductase] + O2 = a (22S)-22-hydroxy C28-steroid + oxidized [NADPH--hemoprotein reductase] + H2O + H(+). It catalyses the reaction campesterol + reduced [NADPH--hemoprotein reductase] + O2 = (22S)-22-hydroxycampesterol + oxidized [NADPH--hemoprotein reductase] + H2O + H(+). The catalysed reaction is campestanol + reduced [NADPH--hemoprotein reductase] + O2 = 6-deoxycathasterone + oxidized [NADPH--hemoprotein reductase] + H2O + H(+). Its pathway is plant hormone biosynthesis; brassinosteroid biosynthesis. In terms of biological role, catalyzes the C22-alpha-hydroxylation step in brassinosteroid biosynthesis, which is the rate-limiting step in this biosynthetic pathway. Catalyzes the conversion of campesterol (CR) to (22S)-22-hydroxycampesterol (22-OHCR, 22-hydroxyCR) and of campestanol (CN) to 6-deoxocathasterone (6-deoxoCT). The sequence is that of Steroid (22S)-hydroxylase from Oryza sativa subsp. indica (Rice).